The sequence spans 1028 residues: RNA cytidine acetyltransferase 2 (1028 aa).

ATP is bound by residues glycine 286–leucine 295 and arginine 458. Residues valine 546–proline 729 enclose the N-acetyltransferase domain. Residues isoleucine 617 to valine 619, methionine 624 to serine 630, and lysine 717 each bind acetyl-CoA. The interval serine 982–glutamate 1028 is disordered. Positions threonine 990–serine 1001 are enriched in basic and acidic residues. The segment covering lysine 1018–glutamate 1028 has biased composition (basic residues).

The protein belongs to the RNA cytidine acetyltransferase family. NAT10 subfamily.

The protein localises to the nucleus. Its subcellular location is the nucleolus. The enzyme catalyses a cytidine in 18S rRNA + acetyl-CoA + ATP + H2O = an N(4)-acetylcytidine in 18S rRNA + ADP + phosphate + CoA + H(+). It carries out the reaction a cytidine in tRNA + acetyl-CoA + ATP + H2O = an N(4)-acetylcytidine in tRNA + ADP + phosphate + CoA + H(+). In terms of biological role, RNA cytidine acetyltransferase with specificity toward both 18S rRNA and tRNAs. Catalyzes the formation of N(4)-acetylcytidine (ac4C) in 18S rRNA. Required for early nucleolar cleavages of precursor rRNA at sites A0, A1 and A2 during 18S rRNA synthesis. Catalyzes the formation of ac4C in serine and leucine tRNAs. Requires a tRNA-binding adapter protein for full tRNA acetyltransferase activity but not for 18S rRNA acetylation. This is RNA cytidine acetyltransferase 2 from Arabidopsis thaliana (Mouse-ear cress).